Here is a 495-residue protein sequence, read N- to C-terminus: Keratin, type II cytoskeletal 74 (495 aa).

Residues 1–105 (MASCHTAGHR…DPEIQKVRAQ (105 aa)) form a head region. Positions 106-141 (EREQIKALNDKFASFIDKVRFLEQQNQVLQTKWELL) are coil 1A. In terms of domain architecture, IF rod spans 106-419 (EREQIKALND…KLLEGEENRM (314 aa)). Positions 142–160 (QQLDLSNCRRNLEPVYEAH) are linker 1. A coil 1B region spans residues 161 to 252 (ISNLRKQLEM…CLYDEEISQL (92 aa)). Positions 253–276 (QTHASETSVILSMDNNRDLDLAGI) are linker 12. The coil 2 stretch occupies residues 277-415 (IAEVRAHYED…ATYRKLLEGE (139 aa)). A tail region spans residues 416–495 (ENRMSGENPS…AAGTLARKTT (80 aa)). The interval 449–495 (DSEAGNAVGSPSTPRNSQSKTRGSSVDPRDAQDESAAAAGTLARKTT) is disordered. Residues 457–472 (GSPSTPRNSQSKTRGS) show a composition bias toward polar residues.

The protein belongs to the intermediate filament family. As to quaternary structure, heterotetramer of two type I and two type II keratins. Expressed in epidermis with a particularly strong staining in the nail matrix, nail bed and hyponychium (at protein level).

In terms of biological role, has a role in hair formation. Specific component of keratin intermediate filaments in the inner root sheath (IRS) of the hair follicle. This chain is Keratin, type II cytoskeletal 74, found in Mus musculus (Mouse).